Consider the following 314-residue polypeptide: Ribosomal protein L11 methyltransferase (314 aa).

Residues Thr-161, Gly-182, Asp-204, and Asn-248 each coordinate S-adenosyl-L-methionine.

It belongs to the methyltransferase superfamily. PrmA family.

It localises to the cytoplasm. The catalysed reaction is L-lysyl-[protein] + 3 S-adenosyl-L-methionine = N(6),N(6),N(6)-trimethyl-L-lysyl-[protein] + 3 S-adenosyl-L-homocysteine + 3 H(+). Its function is as follows. Methylates ribosomal protein L11. This is Ribosomal protein L11 methyltransferase from Listeria innocua serovar 6a (strain ATCC BAA-680 / CLIP 11262).